Here is a 317-residue protein sequence, read N- to C-terminus: Terpene synthase 3 (317 aa).

The DDxx(x)D/E motif motif lies at 96 to 101; sequence DDFYFE. The NDxxSxxxD/E motif motif lies at 223-231; it reads NDMVSFERE.

This sequence belongs to the terpene synthase family.

Functionally, terpene synthase that converts its substrate farnesyl diphosphate (FPP) into the sesquiterpene CAS 137235-51-9 as a major product. Is also able to convert FPP into 9-epi-(E)-caryophyllene, alpha-neoclovene, beta-neoclovene, and 3 yet unidentified sesquiterpenes. The sequence is that of Terpene synthase 3 from Dictyostelium purpureum (Slime mold).